We begin with the raw amino-acid sequence, 512 residues long: 2,3-bisphosphoglycerate-independent phosphoglycerate mutase (512 aa).

Positions 12 and 62 each coordinate Mn(2+). Catalysis depends on S62, which acts as the Phosphoserine intermediate. Residues H123, 154–155 (RD), R181, R187, 253–256 (RPDR), and K336 each bind substrate. 5 residues coordinate Mn(2+): D403, H407, D444, H445, and H462.

This sequence belongs to the BPG-independent phosphoglycerate mutase family. Monomer. Mn(2+) serves as cofactor.

The catalysed reaction is (2R)-2-phosphoglycerate = (2R)-3-phosphoglycerate. It participates in carbohydrate degradation; glycolysis; pyruvate from D-glyceraldehyde 3-phosphate: step 3/5. Catalyzes the interconversion of 2-phosphoglycerate and 3-phosphoglycerate. The chain is 2,3-bisphosphoglycerate-independent phosphoglycerate mutase from Aster yellows witches'-broom phytoplasma (strain AYWB).